The sequence spans 622 residues: MSGPVDTAKSITKKRKRKHGGGARAATETDDAITRPAIENGAVNDSPEKEEDTKKSEKNGKDKSAKKRKVSHASSDEGDESQEEQGAPAQADGDSDDNKDDGNDQSEAENGDNGDKKDTESTDLPSAGTLSLPTVEGEPQKFTELGLSEKTLKAINDMGFETMTEIQRRTIPPLLAGRDVLGAAKTGSGKTLSFLIPAVEMLSALRFKPRNGTGVIVVSPTRELALQIFGVARELCQYHSQTYGIVIGGANRRAEAEKLMKGVNLLIATPGRLLDHLQNTQGFVFKNLKTLVIDEADRILEVGFEDEMRQIVKILPSEERQTMLFSATQTTKVEDLARISLRPGPLYINVDHRKEHSTVEGLEQGYVICEADKRFLLLFSFLKRNLKKKIIVFFSSCNCVKYHAELLNYIDLPVLELHGKQKQQKRTNTFFEFCNAKQGTLICTDVAARGLDIPAVDWIIQFDPPDDPRDYIHRVGRTARGTNAKGRSLMFLQPSEVGFLKHLKEARVPVVEFEFPANKIVNVQSQLEKLIGQNYYLNKSAKEGYRSYLQAYASHSLRSVFDVHKLDLVKVAKGFGFSTPPRIDIQLGASLSRDKKQQQQGRRSYGSQPHSKGLKFKRKHDD.

The interval 1–143 (MSGPVDTAKS…TVEGEPQKFT (143 aa)) is disordered. The segment covering 11 to 21 (ITKKRKRKHGG) has biased composition (basic residues). The span at 51–63 (EDTKKSEKNGKDK) shows a compositional bias: basic and acidic residues. A compositionally biased stretch (acidic residues) spans 93–112 (GDSDDNKDDGNDQSEAENGD). Residues 122-132 (TDLPSAGTLSL) show a composition bias toward polar residues. The Q motif motif lies at 140–168 (QKFTELGLSEKTLKAINDMGFETMTEIQR). The Helicase ATP-binding domain occupies 171 to 347 (IPPLLAGRDV…RISLRPGPLY (177 aa)). 184-191 (AKTGSGKT) is an ATP binding site. A DEAD box motif is present at residues 294–297 (DEAD). Positions 361–531 (GLEQGYVICE…NVQSQLEKLI (171 aa)) constitute a Helicase C-terminal domain. The Bipartite nuclear localization signal signature appears at 373–389 (KRFLLLFSFLKRNLKKK). The interval 588 to 622 (GASLSRDKKQQQQGRRSYGSQPHSKGLKFKRKHDD) is disordered. Over residues 598–608 (QQQGRRSYGSQ) the composition is skewed to low complexity. The span at 612 to 622 (KGLKFKRKHDD) shows a compositional bias: basic residues.

This sequence belongs to the DEAD box helicase family. DDX18/HAS1 subfamily. Associates in the nucleolus with the 60S and pre-60S ribosomal subunits.

It is found in the nucleus. Its subcellular location is the nucleolus. It carries out the reaction ATP + H2O = ADP + phosphate + H(+). Functionally, ATP-dependent RNA helicase involved in 40S ribosomal subunit biogenesis. Required for the processing and cleavage of 35S pre-rRNA at sites A0, A1, and A2, leading to mature 18S rRNA. The chain is ATP-dependent RNA helicase has1 (has1) from Aspergillus fumigatus (strain ATCC MYA-4609 / CBS 101355 / FGSC A1100 / Af293) (Neosartorya fumigata).